Consider the following 96-residue polypeptide: Glutamyl-tRNA(Gln) amidotransferase subunit C (96 aa).

Belongs to the GatC family. Heterotrimer of A, B and C subunits.

The catalysed reaction is L-glutamyl-tRNA(Gln) + L-glutamine + ATP + H2O = L-glutaminyl-tRNA(Gln) + L-glutamate + ADP + phosphate + H(+). The enzyme catalyses L-aspartyl-tRNA(Asn) + L-glutamine + ATP + H2O = L-asparaginyl-tRNA(Asn) + L-glutamate + ADP + phosphate + 2 H(+). Functionally, allows the formation of correctly charged Asn-tRNA(Asn) or Gln-tRNA(Gln) through the transamidation of misacylated Asp-tRNA(Asn) or Glu-tRNA(Gln) in organisms which lack either or both of asparaginyl-tRNA or glutaminyl-tRNA synthetases. The reaction takes place in the presence of glutamine and ATP through an activated phospho-Asp-tRNA(Asn) or phospho-Glu-tRNA(Gln). This is Glutamyl-tRNA(Gln) amidotransferase subunit C from Nostoc sp. (strain PCC 7120 / SAG 25.82 / UTEX 2576).